The sequence spans 313 residues: Probable inactive peptidyl-prolyl cis-trans isomerase-like 6 (313 aa).

The PPIase cyclophilin-type domain occupies 147–310 (YLDICIDLSP…LLCSIADSGV (164 aa)).

The protein belongs to the cyclophilin-type PPIase family.

Functionally, probable inactive PPIase with no peptidyl-prolyl cis-trans isomerase activity. In Mus musculus (Mouse), this protein is Probable inactive peptidyl-prolyl cis-trans isomerase-like 6.